The chain runs to 826 residues: DEAD-box ATP-dependent RNA helicase 13 (826 aa).

Basic and acidic residues predominate over residues 1–10; sequence MVTGDKESSL. Disordered regions lie at residues 1–62 and 76–175; these read MVTG…QLDG and HLTL…GDDT. A compositionally biased stretch (basic residues) spans 11 to 22; sequence MKKRNKRSHKRK. Residues 49-58 are compositionally biased toward polar residues; sequence SFSTLFSGSG. Residues 94 to 128 are compositionally biased toward acidic residues; it reads EDDDDTNETVDEMIEGEEAEEDGEGRDDEDDEDDE. The stretch at 125–166 forms a coiled coil; that stretch reads EDDEETRKKKEKKAKRNKEKKKEKKKKKQKKINEAAKNQDAS. The span at 133 to 154 shows a compositional bias: basic residues; that stretch reads KKEKKAKRNKEKKKEKKKKKQK. The Q motif motif lies at 190–218; it reads SAWSSMRLHPLLMKSIYRLDFKEPTKIQK. The Helicase ATP-binding domain maps to 222–439; that stretch reads NVAAYQGKDV…KLKRGSSKSK (218 aa). Residue 235–242 participates in ATP binding; sequence AETGSGKT. A DEAD box motif is present at residues 363–366; sequence DEAD. A Helicase C-terminal domain is found at 476–644; the sequence is KIEESFIKCE…YMPAVRKRLY (169 aa). Coiled coils occupy residues 666 to 712 and 783 to 810; these read LKKH…TLLS and KMKG…IGRR. The disordered stretch occupies residues 783 to 826; sequence KMKGQSAEKRRDIASLKKKRKEEKIGRRDQRRNQKKQRKLMASS. Basic and acidic residues-rich tracts occupy residues 788-797 and 804-814; these read SAEKRRDIAS and EEKIGRRDQRR. Positions 815-826 are enriched in basic residues; sequence NQKKQRKLMASS.

The protein belongs to the DEAD box helicase family. DDX24/MAK5 subfamily.

The enzyme catalyses ATP + H2O = ADP + phosphate + H(+). The sequence is that of DEAD-box ATP-dependent RNA helicase 13 (RH13) from Arabidopsis thaliana (Mouse-ear cress).